The primary structure comprises 128 residues: SH2 domain-containing protein 1A (128 aa).

The SH2 domain occupies V6 to V102. Residues D67 to Q92 are interaction with FYN SH3 domain. The residue at position 89 (K89) is an N6-acetyllysine. The disordered stretch occupies residues E103–P128. Residues G116–P128 are compositionally biased toward basic and acidic residues.

As to quaternary structure, interacts with CD84, CD244, LY9, SLAMF1 and FYN. Interacts with NTRK1, NTRK2 and NTRK3.

It is found in the cytoplasm. Functionally, cytoplasmic adapter regulating receptors of the signaling lymphocytic activation molecule (SLAM) family such as SLAMF1, CD244, LY9, CD84, SLAMF6 and SLAMF7. In SLAM signaling seems to cooperate with SH2D1B/EAT-2. Initially it has been proposed that association with SLAMF1 prevents SLAMF1 binding to inhibitory effectors including INPP5D/SHIP1 and PTPN11/SHP-2. However, by simultaneous interactions, recruits FYN which subsequently phosphorylates and activates SLAMF1. Positively regulates CD244/2B4- and CD84-mediated natural killer (NK) cell functions. Can also promote CD48-, SLAMF6 -, LY9-, and SLAMF7-mediated NK cell activation. In the context of NK cell-mediated cytotoxicity enhances conjugate formation with target cells. May also regulate the activity of the neurotrophin receptors NTRK1, NTRK2 and NTRK3. This is SH2 domain-containing protein 1A (SH2D1A) from Sus scrofa (Pig).